The chain runs to 998 residues: Sensor histidine kinase AruS (998 aa).

Disordered stretches follow at residues 27-82 (ERRP…HARA), 154-198 (RQAG…LPAG), and 224-245 (RQHP…RQPR). Residues 40-49 (GEAAVRRAGL) show a composition bias toward low complexity. Over residues 161-183 (HRLHRPRTTHRHAVRRAPGRRRE) the composition is skewed to basic residues. The next 2 membrane-spanning stretches (helical) occupy residues 264 to 284 (VLLF…FFEY) and 395 to 415 (ASLL…SWLF). Positions 417–473 (SLVTRHLWRMSEFAGHIAEGDLQQPLRLDKVDRERDEIDAVAAALEDMRQALRTDRR) constitute an HAMP domain. The region spanning 513–734 (TMSHEIRTPL…TFWFEIELAL (222 aa)) is the Histidine kinase domain. Residue histidine 516 is modified to Phosphohistidine; by autocatalysis. The region spanning 751–869 (EVLLVEDVAL…ELRRALGEVG (119 aa)) is the Response regulatory domain. Aspartate 800 bears the 4-aspartylphosphate mark. An HPt domain is found at 894-987 (GRHKLAGLLG…RDGAEALRRA (94 aa)). A Phosphohistidine modification is found at histidine 933.

Post-translationally, autophosphorylated. Activation may require a sequential transfer of a phosphate group from a His in the primary transmitter domain, to an Asp in the receiver domain and to a His in the secondary transmitter domain.

The protein localises to the cell membrane. The catalysed reaction is ATP + protein L-histidine = ADP + protein N-phospho-L-histidine.. It functions in the pathway amino-acid degradation; L-arginine degradation [regulation]. Its function is as follows. Member of the two-component regulatory system AruS/AruR, which is involved in the regulation of the arginine transaminase (ATA) pathway in response to exogeneous L-arginine. Probably functions as a sensor kinase that phosphorylates AruR. This is Sensor histidine kinase AruS (aruS) from Pseudomonas aeruginosa (strain ATCC 15692 / DSM 22644 / CIP 104116 / JCM 14847 / LMG 12228 / 1C / PRS 101 / PAO1).